The following is a 704-amino-acid chain: Elongation factor G (704 aa).

Residues 8 to 291 enclose the tr-type G domain; the sequence is VRYRNIGISA…AVVEYLPSPS (284 aa). Residues 17-24, 88-92, and 142-145 each bind GTP; these read AHIDAGKT, DTPGH, and NKMD.

It belongs to the TRAFAC class translation factor GTPase superfamily. Classic translation factor GTPase family. EF-G/EF-2 subfamily.

The protein resides in the cytoplasm. Catalyzes the GTP-dependent ribosomal translocation step during translation elongation. During this step, the ribosome changes from the pre-translocational (PRE) to the post-translocational (POST) state as the newly formed A-site-bound peptidyl-tRNA and P-site-bound deacylated tRNA move to the P and E sites, respectively. Catalyzes the coordinated movement of the two tRNA molecules, the mRNA and conformational changes in the ribosome. The sequence is that of Elongation factor G from Blochmanniella pennsylvanica (strain BPEN).